The following is a 604-amino-acid chain: Aspartate--tRNA(Asp/Asn) ligase (604 aa).

An L-aspartate-binding site is contributed by Glu-175. Residues 199 to 202 (QQFK) form an aspartate region. Positions 221 and 456 each coordinate L-aspartate. 221–223 (RDE) contributes to the ATP binding site. Glu-496 is an ATP binding site. Arg-503 is a binding site for L-aspartate. 548–551 (GVDR) is an ATP binding site.

The protein belongs to the class-II aminoacyl-tRNA synthetase family. Type 1 subfamily. Homodimer.

It is found in the cytoplasm. It catalyses the reaction tRNA(Asx) + L-aspartate + ATP = L-aspartyl-tRNA(Asx) + AMP + diphosphate. Aspartyl-tRNA synthetase with relaxed tRNA specificity since it is able to aspartylate not only its cognate tRNA(Asp) but also tRNA(Asn). Reaction proceeds in two steps: L-aspartate is first activated by ATP to form Asp-AMP and then transferred to the acceptor end of tRNA(Asp/Asn). The sequence is that of Aspartate--tRNA(Asp/Asn) ligase from Methylobacterium nodulans (strain LMG 21967 / CNCM I-2342 / ORS 2060).